Reading from the N-terminus, the 210-residue chain is Frataxin, mitochondrial (210 aa).

The transit peptide at 1–41 directs the protein to the mitochondrion; that stretch reads MWTFGRRAVAGLLASPSPAQAQTLARAPRLAELAQLCSRRG.

It belongs to the frataxin family. In terms of assembly, component of the mitochondrial core iron-sulfur cluster (ISC) complex composed of NFS1, LYRM4, NDUFAB1, ISCU, FXN, and FDX2; this complex is a heterohexamer containing two copies of each monomer. Homodimer. Monomer (probable predominant form). Oligomer. Monomers and polymeric aggregates of &gt;1 MDa have been isolated from mitochondria. A small fraction of heterologous overexpressed recombinant frataxin forms high-molecular weight aggregates that incorporate iron. Interacts with LYRM4. Interacts (via ferrous form) with ISCU; the interaction is possible when both are bound to the dimeric form of the cysteine desulfurase complex (NFS1:LYRM4) and the interaction enhances FXN interaction to the dimeric form of the cysteine desulfurase complex (NFS1:LYRM4). Interacts with FECH; one iron-bound FXN monomer seems to interact with a FECH homodimer. Interacts with SDHA and SDHB. Interacts with ACO2; the interaction is dependent on citrate. Interacts with HSPA9. Interacts with ACO1. Interacts with ISCU (cytoplasmic form). In terms of processing, processed in two steps by mitochondrial processing peptidase (MPP). MPP first cleaves the precursor to intermediate form and subsequently converts the intermediate to yield frataxin mature form (frataxin(81-210)) which is the predominant form. The additional forms, frataxin(56-210) and frataxin(78-210), seem to be produced when the normal maturation process is impaired; their physiological relevance is unsure.

It localises to the mitochondrion. The protein localises to the cytoplasm. The protein resides in the cytosol. It carries out the reaction 4 Fe(2+) + O2 + 4 H(+) = 4 Fe(3+) + 2 H2O. Functionally, functions as an activator of persulfide transfer to the scaffoding protein ISCU as component of the core iron-sulfur cluster (ISC) assembly complex and participates to the [2Fe-2S] cluster assembly. Accelerates sulfur transfer from NFS1 persulfide intermediate to ISCU and to small thiols such as L-cysteine and glutathione leading to persulfuration of these thiols and ultimately sulfide release. Binds ferrous ion and is released from FXN upon the addition of both L-cysteine and reduced FDX2 during [2Fe-2S] cluster assembly. The core iron-sulfur cluster (ISC) assembly complex is involved in the de novo synthesis of a [2Fe-2S] cluster, the first step of the mitochondrial iron-sulfur protein biogenesis. This process is initiated by the cysteine desulfurase complex (NFS1:LYRM4:NDUFAB1) that produces persulfide which is delivered on the scaffold protein ISCU in a FXN-dependent manner. Then this complex is stabilized by FDX2 which provides reducing equivalents to accomplish the [2Fe-2S] cluster assembly. Finally, the [2Fe-2S] cluster is transferred from ISCU to chaperone proteins, including HSCB, HSPA9 and GLRX5. May play a role in the protection against iron-catalyzed oxidative stress through its ability to catalyze the oxidation of Fe(2+) to Fe(3+); the oligomeric form but not the monomeric form has in vitro ferroxidase activity. May be able to store large amounts of iron in the form of a ferrihydrite mineral by oligomerization; however, the physiological relevance is unsure as reports are conflicting and the function has only been shown using heterologous overexpression systems. May function as an iron chaperone protein that protects the aconitase [4Fe-4S]2+ cluster from disassembly and promotes enzyme reactivation. May play a role as a high affinity iron binding partner for FECH that is capable of both delivering iron to ferrochelatase and mediating the terminal step in mitochondrial heme biosynthesis. Its function is as follows. Modulates the RNA-binding activity of ACO1. May be involved in the cytoplasmic iron-sulfur protein biogenesis. May contribute to oxidative stress resistance and overall cell survival. The chain is Frataxin, mitochondrial from Macaca fascicularis (Crab-eating macaque).